The chain runs to 250 residues: 3-deoxy-manno-octulosonate cytidylyltransferase (250 aa).

Belongs to the KdsB family.

It is found in the cytoplasm. The catalysed reaction is 3-deoxy-alpha-D-manno-oct-2-ulosonate + CTP = CMP-3-deoxy-beta-D-manno-octulosonate + diphosphate. The protein operates within nucleotide-sugar biosynthesis; CMP-3-deoxy-D-manno-octulosonate biosynthesis; CMP-3-deoxy-D-manno-octulosonate from 3-deoxy-D-manno-octulosonate and CTP: step 1/1. It functions in the pathway bacterial outer membrane biogenesis; lipopolysaccharide biosynthesis. Its function is as follows. Activates KDO (a required 8-carbon sugar) for incorporation into bacterial lipopolysaccharide in Gram-negative bacteria. The polypeptide is 3-deoxy-manno-octulosonate cytidylyltransferase (Azorhizobium caulinodans (strain ATCC 43989 / DSM 5975 / JCM 20966 / LMG 6465 / NBRC 14845 / NCIMB 13405 / ORS 571)).